Here is a 168-residue protein sequence, read N- to C-terminus: Lipoprotein signal peptidase (168 aa).

Transmembrane regions (helical) follow at residues 57 to 77 and 86 to 106; these read PKEV…LYVF and FILP…DRIT. Catalysis depends on residues Asp-112 and Asp-138. Residues 131–151 traverse the membrane as a helical segment; the sequence is WPIFNIADSAITIGACLLILF.

It belongs to the peptidase A8 family.

The protein resides in the cell inner membrane. The enzyme catalyses Release of signal peptides from bacterial membrane prolipoproteins. Hydrolyzes -Xaa-Yaa-Zaa-|-(S,diacylglyceryl)Cys-, in which Xaa is hydrophobic (preferably Leu), and Yaa (Ala or Ser) and Zaa (Gly or Ala) have small, neutral side chains.. The protein operates within protein modification; lipoprotein biosynthesis (signal peptide cleavage). In terms of biological role, this protein specifically catalyzes the removal of signal peptides from prolipoproteins. In Chlorobium phaeobacteroides (strain DSM 266 / SMG 266 / 2430), this protein is Lipoprotein signal peptidase.